A 217-amino-acid chain; its full sequence is Chaperone protein TorD (217 aa).

It belongs to the TorD/DmsD family. TorD subfamily.

The protein resides in the cytoplasm. Its function is as follows. Involved in the biogenesis of TorA. Acts on TorA before the insertion of the molybdenum cofactor and, as a result, probably favors a conformation of the apoenzyme that is competent for acquiring the cofactor. This chain is Chaperone protein TorD, found in Shewanella oneidensis (strain ATCC 700550 / JCM 31522 / CIP 106686 / LMG 19005 / NCIMB 14063 / MR-1).